Consider the following 659-residue polypeptide: Tetratricopeptide repeat protein 30 homolog (659 aa).

7 TPR repeats span residues 3–36 (SQNM…LNGI), 43–76 (RAGL…VPDV), 143–176 (ATVK…GGFN), 178–210 (HIAY…GIRN), 391–424 (CRSA…RAWI), 450–483 (TWRL…NYDD), and 533–566 (CIVN…GSGA).

This sequence belongs to the TTC30/dfy-1/fleer family.

It localises to the cell projection. The protein localises to the cilium. Functionally, required for polyglutamylation of axonemal tubulin in sensory cilia. Plays a role in anterograde intraflagellar transport (IFT), the process by which cilia precursors are transported from the base of the cilium to the site of their incorporation at the tip. The protein is Tetratricopeptide repeat protein 30 homolog of Aedes aegypti (Yellowfever mosquito).